A 783-amino-acid chain; its full sequence is MNTKILDQLEFNKVKDQFTEYLQTEQAQAELCDLVPMTNPERIQNQFTEIQEMSEIFVEHHGFAIGSLRDISEPLRRLELDADLNIQELIAIKKVLQASADLSRFYADLENVELIALKRLFEKIEAFPSLQGSLQSINDGGFIEHFASPELQNIRRQLKACDDAIRQTLQDILKKSGHMLAENLIASRNGRSVLPVKNTYRNRIAGVVHDISSSGNTVYIEPRAVIQLNEKITQLRADERHEMARILHELSDQLRPHTAAIANNAWILGHMDFIRGKYLYLHDKKAIIPEISDNQTLQLLNVRHPLLINPVANDLRFDEDLTVIVITGPNTGGKTVMLKTLGLAQLMAQSGLPILADKGSRVAIFQEIFADIGDEQSIEQSLSTFSSHMTHIVEILNTADSNSLVLVDELGAGTDPQEGASLAMAILEHLRLSQIKTMATTHYPELKAYGIETQHVENASMEFDTATLRPTYRFMQGVPGRSNAFEIARRLGLNEIIVKEAENLTDTDSDVNRIIEQLEAQTVETQKRLEHIKDVEQENLKFNRAVKKLYNEFSHEYDKELEKAQKEIQEMVDTALAESDSILKNLHDKSQLKPHEVIDAKGKLKKLAAQVDLSKNKVLRKAKKEKAARAPRVGDDIIVTAYGQRGTLTSQAKNGNWEAQVGLIKMSLKADEFTLVRTQAEAQQPKKKQINVVKKAKKTSSDGPRARLDLRGKRYEEAMQELDAFIDQALLNNMSQVEIIHGIGTGVIRDAVTKYLRRHRHVKNFEYAPQSAGGSGCTIATLG.

328 to 335 (GPNTGGKT) is an ATP binding site. In terms of domain architecture, Smr spans 708-783 (LDLRGKRYEE…GSGCTIATLG (76 aa)).

This sequence belongs to the DNA mismatch repair MutS family. MutS2 subfamily. In terms of assembly, homodimer. Binds to stalled ribosomes, contacting rRNA.

In terms of biological role, endonuclease that is involved in the suppression of homologous recombination and thus may have a key role in the control of bacterial genetic diversity. Acts as a ribosome collision sensor, splitting the ribosome into its 2 subunits. Detects stalled/collided 70S ribosomes which it binds and splits by an ATP-hydrolysis driven conformational change. Acts upstream of the ribosome quality control system (RQC), a ribosome-associated complex that mediates the extraction of incompletely synthesized nascent chains from stalled ribosomes and their subsequent degradation. Probably generates substrates for RQC. In Streptococcus thermophilus (strain CNRZ 1066), this protein is Endonuclease MutS2.